Reading from the N-terminus, the 657-residue chain is Glycogen debranching enzyme (657 aa).

Asp336 (nucleophile) is an active-site residue. Glu371 functions as the Proton donor in the catalytic mechanism. The segment at 460-479 is disordered; the sequence is ANGEENRDGTNNNYSNNHGK.

This sequence belongs to the glycosyl hydrolase 13 family.

The catalysed reaction is Hydrolysis of (1-&gt;6)-alpha-D-glucosidic linkages to branches with degrees of polymerization of three or four glucose residues in limit dextrin.. Its pathway is glycan degradation; glycogen degradation. Functionally, removes maltotriose and maltotetraose chains that are attached by 1,6-alpha-linkage to the limit dextrin main chain, generating a debranched limit dextrin. This is Glycogen debranching enzyme from Escherichia coli O81 (strain ED1a).